A 420-amino-acid polypeptide reads, in one-letter code: Gamma-glutamyl phosphate reductase (420 aa).

Belongs to the gamma-glutamyl phosphate reductase family.

The protein localises to the cytoplasm. The catalysed reaction is L-glutamate 5-semialdehyde + phosphate + NADP(+) = L-glutamyl 5-phosphate + NADPH + H(+). Its pathway is amino-acid biosynthesis; L-proline biosynthesis; L-glutamate 5-semialdehyde from L-glutamate: step 2/2. Its function is as follows. Catalyzes the NADPH-dependent reduction of L-glutamate 5-phosphate into L-glutamate 5-semialdehyde and phosphate. The product spontaneously undergoes cyclization to form 1-pyrroline-5-carboxylate. The sequence is that of Gamma-glutamyl phosphate reductase from Neisseria meningitidis serogroup A / serotype 4A (strain DSM 15465 / Z2491).